Reading from the N-terminus, the 436-residue chain is 3-ketoacyl-CoA thiolase (436 aa).

The Acyl-thioester intermediate role is filled by Cys-99. Active-site proton acceptor residues include His-392 and Cys-422.

Belongs to the thiolase-like superfamily. Thiolase family. In terms of assembly, heterotetramer of two alpha chains (FadJ) and two beta chains (FadI).

It is found in the cytoplasm. The catalysed reaction is an acyl-CoA + acetyl-CoA = a 3-oxoacyl-CoA + CoA. It participates in lipid metabolism; fatty acid beta-oxidation. In terms of biological role, catalyzes the final step of fatty acid oxidation in which acetyl-CoA is released and the CoA ester of a fatty acid two carbons shorter is formed. This chain is 3-ketoacyl-CoA thiolase, found in Cronobacter sakazakii (strain ATCC BAA-894) (Enterobacter sakazakii).